Reading from the N-terminus, the 243-residue chain is Adenylate kinase 4 (243 aa).

40 to 45 (GSGKGT) serves as a coordination point for ATP. The tract at residues 60–89 (ATGDMLRAAVAAKTPLGVKAKEAMDKGELV) is NMP. Residues threonine 61, arginine 66, 87–89 (ELV), 115–118 (GFPR), and glutamine 122 each bind AMP. Residues 156 to 193 (GRWIHPSSGRSYHTKFAPPKVPGVDDVTGEPLIQRKDD) are LID. Arginine 157 provides a ligand contact to ATP. AMP-binding residues include arginine 190 and arginine 201.

This sequence belongs to the adenylate kinase family.

The protein resides in the cytoplasm. The enzyme catalyses AMP + ATP = 2 ADP. Functionally, catalyzes the reversible transfer of the terminal phosphate group between ATP and AMP. Plays an important role in cellular energy homeostasis and in adenine nucleotide metabolism. The chain is Adenylate kinase 4 (ADK-B) from Oryza sativa subsp. japonica (Rice).